We begin with the raw amino-acid sequence, 217 residues long: Killer cell lectin-like receptor subfamily B member 1F (217 aa).

Residues Met1–Cys45 lie on the Cytoplasmic side of the membrane. The LCK-binding motif motif lies at Cys31–Pro34. A helical; Signal-anchor for type II membrane protein membrane pass occupies residues Ala46 to Val66. The Extracellular portion of the chain corresponds to Gln67–Val217. The N-linked (GlcNAc...) asparagine glycan is linked to Asn81. The C-type lectin domain occupies His101–Gln211. Intrachain disulfides connect Cys122–Cys210 and Cys189–Cys202.

As to expression, highly expressed in dendritic cells. Detectable in natural killer cells.

The protein localises to the membrane. Its function is as follows. Binds CLEC2I/Clr-g leading to activation of natural killer cells or costimulation of IL-2 production and proliferation of T-cells in response to antigen stimulation. May contribute to the formation of the immunological synapse between T-cells and antigen-presenting dendritic cells. The protein is Killer cell lectin-like receptor subfamily B member 1F (Klrb1f) of Mus musculus (Mouse).